A 335-amino-acid chain; its full sequence is Calcium/calmodulin-dependent protein kinase type I (335 aa).

The Protein kinase domain occupies 31 to 291 (YRVGRVLGGG…AADALKHPFL (261 aa)). Residue 37–45 (LGGGTYATV) participates in ATP binding. Catalysis depends on Asp154, which acts as the Proton acceptor. Thr192 is subject to Phosphothreonine; by autocatalysis. The calmodulin-binding stretch occupies residues 310–334 (NARKTFRTAYNAVRAFNTWKKLENK).

Belongs to the protein kinase superfamily. CAMK Ser/Thr protein kinase family. CaMK subfamily.

Its subcellular location is the cytoplasm. The enzyme catalyses L-seryl-[protein] + ATP = O-phospho-L-seryl-[protein] + ADP + H(+). The catalysed reaction is L-threonyl-[protein] + ATP = O-phospho-L-threonyl-[protein] + ADP + H(+). Functionally, important in cell cycle regulation. The chain is Calcium/calmodulin-dependent protein kinase type I (cmk1) from Schizosaccharomyces pombe (strain 972 / ATCC 24843) (Fission yeast).